Here is a 362-residue protein sequence, read N- to C-terminus: Homoserine O-acetyltransferase FUB5 (362 aa).

One can recognise an AB hydrolase-1 domain in the interval 12–335 (NVMIICHALS…VSDDGHDAFL (324 aa)). Catalysis depends on serine 110, which acts as the Nucleophile. The disordered stretch occupies residues 195-232 (RFGRDTGNKKKTQQQDSKTIPNNGTPIHSQGGADETPV). The segment covering 208–222 (QQDSKTIPNNGTPIH) has biased composition (polar residues). Catalysis depends on residues aspartate 302 and histidine 331.

This sequence belongs to the AB hydrolase superfamily. MetX family.

The enzyme catalyses L-homoserine + acetyl-CoA = O-acetyl-L-homoserine + CoA. It functions in the pathway mycotoxin biosynthesis. Homoserine O-acetyltransferase; part of the gene cluster that mediates the biosynthesis of fusaric acid, a mycotoxin with low to moderate toxicity to animals and humans, but with high phytotoxic properties. L-aspartate is suggested as fusaric acid amino acid precursor that is activated and further processed to O-acetyl-L-homoserine by cluster enzymes aspartate kinase FUB3 and homoserine O-acetyltransferase FUB5, as well as enzymes of the primary metabolism. The polyketide synthase (PKS) FUB1 generates the triketide trans-2-hexenal which is presumptively released by the hydrolase FUB4 and linked to the NRPS-bound amino acid precursor by NAD(P)-dependent dehydrogenase FUB6. FUB1, FUB4, and the non-canonical NRPS Fub8 may form an enzyme complex. Further processing of the NRPS-bound intermediate might be carried out by FUB6 and the O-acetylhomoserine FUB7, enabling a spontaneous electrocyclization to close the carbon backbone of fusaric acid. Dihydrofusaric acid is likely to be released via reduction by the thioester reductase (TR) domain of FUB8 whereupon the final oxidation to fusaric acid may (also) be performed by the FMN-dependent dehydrogenase FUB9. This chain is Homoserine O-acetyltransferase FUB5, found in Fusarium oxysporum f. sp. lycopersici (strain 4287 / CBS 123668 / FGSC 9935 / NRRL 34936) (Fusarium vascular wilt of tomato).